The following is a 392-amino-acid chain: Succinate--CoA ligase [ADP-forming] subunit beta (392 aa).

In terms of domain architecture, ATP-grasp spans 9 to 248 (KDILKKFGVS…TNEEDPFEVE (240 aa)). ATP is bound by residues Lys50, 57 to 59 (GRG), Glu103, Met106, and Glu111. Positions 203 and 217 each coordinate Mg(2+). Residues Asn268 and 325–327 (GIV) each bind substrate.

This sequence belongs to the succinate/malate CoA ligase beta subunit family. Heterotetramer of two alpha and two beta subunits. The cofactor is Mg(2+).

The enzyme catalyses succinate + ATP + CoA = succinyl-CoA + ADP + phosphate. The catalysed reaction is GTP + succinate + CoA = succinyl-CoA + GDP + phosphate. It functions in the pathway carbohydrate metabolism; tricarboxylic acid cycle; succinate from succinyl-CoA (ligase route): step 1/1. Functionally, succinyl-CoA synthetase functions in the citric acid cycle (TCA), coupling the hydrolysis of succinyl-CoA to the synthesis of either ATP or GTP and thus represents the only step of substrate-level phosphorylation in the TCA. The beta subunit provides nucleotide specificity of the enzyme and binds the substrate succinate, while the binding sites for coenzyme A and phosphate are found in the alpha subunit. The sequence is that of Succinate--CoA ligase [ADP-forming] subunit beta from Chlorobium limicola (strain DSM 245 / NBRC 103803 / 6330).